A 420-amino-acid chain; its full sequence is MKCFLFPLGDKKDEQRSPKPVSPTSNFSDVNKSGSDFSPRDVSGTSTVSSTGRNSNTSMSARENNLREFTIGDLKSATRNFSRSGMIGEGGFGCVFWGTIKNLEDPSKKIEVAVKQLGKRGLQGHKEWVTEVNFLGVVEHSNLVKLLGHCAEDDERGIQRLLVYEYMPNQSVEFHLSPRSPTVLTWDLRLRIAQDAARGLTYLHEEMDFQIIFRDFKSSNILLDENWTAKLSDFGLARLGPSPGSSHVSTDVVGTMGYAAPEYIQTGRLTSKSDVWGYGVFIYELITGRRPLDRNKPKGEQKLLEWVRPYLSDTRRFRLIVDPRLEGKYMIKSVQKLAVVANLCLTRNAKARPKMSEVLEMVTKIVEASSPGNGGKKPQLVPLKSQETSRVEEGKNKKVLDGAEGGWLEKLWNPKNVRAC.

The segment at 1-64 is disordered; that stretch reads MKCFLFPLGD…SNTSMSAREN (64 aa). Residues 22–36 show a composition bias toward polar residues; that stretch reads SPTSNFSDVNKSGSD. Residues 42-58 are compositionally biased toward low complexity; it reads VSGTSTVSSTGRNSNTS. Phosphothreonine is present on Thr-70. A Protein kinase domain is found at 81 to 366; the sequence is FSRSGMIGEG…EVLEMVTKIV (286 aa). Residues 87–95 and Lys-115 each bind ATP; that span reads IGEGGFGCV. A Phosphotyrosine modification is found at Tyr-164. Asp-215 acts as the Proton acceptor in catalysis. 2 positions are modified to phosphoserine: Ser-219 and Ser-249. Phosphothreonine occurs at positions 250 and 255. Tyr-263 bears the Phosphotyrosine mark. Residues 369-396 form a disordered region; that stretch reads SSPGNGGKKPQLVPLKSQETSRVEEGKN. The segment covering 387–396 has biased composition (basic and acidic residues); that stretch reads ETSRVEEGKN.

The protein belongs to the protein kinase superfamily. Ser/Thr protein kinase family. In terms of assembly, interacts with FLS2.

The protein resides in the cell membrane. The enzyme catalyses L-seryl-[protein] + ATP = O-phospho-L-seryl-[protein] + ADP + H(+). The catalysed reaction is L-threonyl-[protein] + ATP = O-phospho-L-threonyl-[protein] + ADP + H(+). In terms of biological role, functions redundantly with PCRK1 in basal resistance against bacterial pathogens and in regulation of plant immunity. Functions together with PCRK1 downstream of the pathogen-associated molecular pattern (PAMP) receptor FLS2. Contributes to the induction of SARD1 and CBP60G, which are transcriptional activator of ICS1, an enzyme involved in salicylate (SA) biosynthesis upon pathogen attack. The sequence is that of Serine/threonine-protein kinase PCRK2 from Arabidopsis thaliana (Mouse-ear cress).